The sequence spans 459 residues: FAD-dependent monooxygenase CTB5 (459 aa).

An FAD-binding PCMH-type domain is found at 10–187 (SDLHPSCIAL…TAVTLKAFEQ (178 aa)).

Belongs to the oxygen-dependent FAD-linked oxidoreductase family.

It participates in mycotoxin biosynthesis. In terms of biological role, FAD-dependent monooxygenase; part of the gene cluster that mediates the biosynthesis of cercosporin, a light-activated, non-host-selective toxin. The perylenequinone chromophore of cercosporin absorbs light energy to attain an electronically-activated triplet state and produces active oxygen species such as the hydroxyl radical, superoxide, hydrogen peroxide or singlet oxygen upon reaction with oxygen molecules. These reactive oxygen species cause damage to various cellular components including lipids, proteins and nucleic acids. The first step of cercosporin biosynthesis is performed by the polyketide synthase CTB1 which catalyzes the formation of nor-toralactone. The starter unit acyltransferase (SAT) domain of CTB1 initiates polyketide extension by the selective utilization of acetyl-CoA, which is elongated to the heptaketide in the beta-ketoacyl synthase (KS) domain by successive condensations with six malonyl units introduced by the malonyl acyltransferase (MAT) domain. The product template (PT) domain catalyzes C4-C9 and C2-C11 aldol cyclizations and dehydrations to a trihydroxynaphthalene, which is thought to be delivered to the thioesterase (TE) domain for product release. The bifunctional enzyme CTB3 then methylates nor-toralactone to toralactone before conducting an unusual oxidative aromatic ring opening. The O-methyltransferase CTB2 further methylates the nascent OH-6 of the CBT3 product, blocking further oxidation at this site before the reductase CTB6 reduces the 2-oxopropyl ketone at position C7, giving naphthalene. The FAD-dependent monooxygenase CTB5 in concert with the multicopper oxidase CTB12 are responsible for homodimerization of naphthalene with CTB7 installing the dioxepine moiety, finally producing cercosporin. The fasciclin domain-containing protein CTB11 might act with CTB5 and CTB12 whereas the roles of CTB9 and CTB10 have still to be elucidated. This is FAD-dependent monooxygenase CTB5 from Cercospora nicotianae (Barn spot disease fungus).